The primary structure comprises 663 residues: Methionine--tRNA ligase (663 aa).

Residues 10–20 (AYTNGPLHLGH) carry the 'HIGH' region motif. 4 residues coordinate Zn(2+): cysteine 142, cysteine 145, cysteine 154, and cysteine 157. The 'KMSKS' region signature appears at 323-327 (KMSTS). Threonine 326 lines the ATP pocket. The 101-residue stretch at 563–663 (YFTKVDLRVG…REISLGSKIH (101 aa)) folds into the tRNA-binding domain.

The protein belongs to the class-I aminoacyl-tRNA synthetase family. MetG type 1 subfamily. As to quaternary structure, homodimer. Zn(2+) serves as cofactor.

Its subcellular location is the cytoplasm. The enzyme catalyses tRNA(Met) + L-methionine + ATP = L-methionyl-tRNA(Met) + AMP + diphosphate. Is required not only for elongation of protein synthesis but also for the initiation of all mRNA translation through initiator tRNA(fMet) aminoacylation. In Methanococcus vannielii (strain ATCC 35089 / DSM 1224 / JCM 13029 / OCM 148 / SB), this protein is Methionine--tRNA ligase.